Here is a 160-residue protein sequence, read N- to C-terminus: Ribosomal RNA large subunit methyltransferase H (160 aa).

Residues Leu-76, Gly-108, and 127–132 (LGKMTW) contribute to the S-adenosyl-L-methionine site.

The protein belongs to the RNA methyltransferase RlmH family. Homodimer.

Its subcellular location is the cytoplasm. It carries out the reaction pseudouridine(1915) in 23S rRNA + S-adenosyl-L-methionine = N(3)-methylpseudouridine(1915) in 23S rRNA + S-adenosyl-L-homocysteine + H(+). Specifically methylates the pseudouridine at position 1915 (m3Psi1915) in 23S rRNA. The protein is Ribosomal RNA large subunit methyltransferase H of Rhizobium johnstonii (strain DSM 114642 / LMG 32736 / 3841) (Rhizobium leguminosarum bv. viciae).